The following is a 349-amino-acid chain: AA9 family lytic polysaccharide monooxygenase A (349 aa).

Residues 1-19 (MKSTFGLLALAAAAKLVSA) form the signal peptide. The Cu(2+) site is built by His20 and His102. A disulfide bond links Cys62 and Cys183. An O2-binding site is contributed by His169. Tyr180 serves as a coordination point for Cu(2+). Positions 233-304 (DGSSSGSSGS…SGSNSGSDSC (72 aa)) are disordered. Low complexity-rich tracts occupy residues 234–262 (GSSS…AVPT) and 269–304 (TSAT…SDSC). A CBM1 domain is found at 311–347 (GSVKIYGQCGGQNYSGPTSCEAGLICKEWNPYYHQCV). Asn323 carries N-linked (GlcNAc...) asparagine glycosylation.

This sequence belongs to the polysaccharide monooxygenase AA9 family. Cu(2+) is required as a cofactor.

It is found in the secreted. The enzyme catalyses [(1-&gt;4)-beta-D-glucosyl]n+m + reduced acceptor + O2 = 4-dehydro-beta-D-glucosyl-[(1-&gt;4)-beta-D-glucosyl]n-1 + [(1-&gt;4)-beta-D-glucosyl]m + acceptor + H2O.. In terms of biological role, lytic polysaccharide monooxygenase (LPMO) that depolymerizes crystalline and amorphous polysaccharides via the oxidation of scissile alpha- or beta-(1-4)-glycosidic bonds, yielding C4 oxidation products. Catalysis by LPMOs requires the reduction of the active-site copper from Cu(II) to Cu(I) by a reducing agent and H(2)O(2) or O(2) as a cosubstrate. This Aspergillus fumigatus (strain CBS 144.89 / FGSC A1163 / CEA10) (Neosartorya fumigata) protein is AA9 family lytic polysaccharide monooxygenase A (eglD).